Consider the following 432-residue polypeptide: Adenylosuccinate synthetase (432 aa).

GTP contacts are provided by residues G13–K19 and G41–T43. D14 acts as the Proton acceptor in catalysis. Residues D14 and G41 each contribute to the Mg(2+) site. Residues D14 to K17, N39 to H42, T130, R144, Q225, T240, and R304 each bind IMP. The active-site Proton donor is the H42. S300 to R306 is a substrate binding site. GTP is bound by residues R306, K332–D334, and S416–G418.

The protein belongs to the adenylosuccinate synthetase family. In terms of assembly, homodimer. The cofactor is Mg(2+).

Its subcellular location is the cytoplasm. It carries out the reaction IMP + L-aspartate + GTP = N(6)-(1,2-dicarboxyethyl)-AMP + GDP + phosphate + 2 H(+). Its pathway is purine metabolism; AMP biosynthesis via de novo pathway; AMP from IMP: step 1/2. Its function is as follows. Plays an important role in the de novo pathway of purine nucleotide biosynthesis. Catalyzes the first committed step in the biosynthesis of AMP from IMP. This is Adenylosuccinate synthetase from Nitrosomonas europaea (strain ATCC 19718 / CIP 103999 / KCTC 2705 / NBRC 14298).